The primary structure comprises 71 residues: Peptide Ctri10261 (71 aa).

Residues methionine 1–alanine 23 form the signal peptide. Phenylalanine 37 carries the phenylalanine amide modification. A propeptide spanning residues serine 41 to tyrosine 71 is cleaved from the precursor.

Belongs to the non-disulfide-bridged peptide (NDBP) superfamily. Short antimicrobial peptide (group 4) family. In terms of tissue distribution, expressed by the venom gland.

It is found in the secreted. Antimicrobial peptide. The polypeptide is Peptide Ctri10261 (Chaerilus tricostatus (Scorpion)).